Reading from the N-terminus, the 601-residue chain is Beta-phellandrene synthase (601 aa).

The transit peptide at 1 to 35 directs the protein to the chloroplast; it reads MSTISIHHVGILRNPLPSKNKRALINNPWSLSLPR. Mn(2+) contacts are provided by Asp-356 and Asp-360. The DDXXD motif motif lies at 356-360; the sequence is DDVYD. Homodimerization regions lie at residues 362–368 and 434–471; these read YGTLDEL and EAEW…LSIP. 2 residues coordinate Mn(2+): Asp-499 and Glu-507.

Belongs to the terpene synthase family. Homodimer. Requires Mn(2+) as cofactor. The cofactor is Mg(2+). In terms of tissue distribution, expressed in peltate glandular trichomes. Present at low levels in flowers and stems.

It is found in the plastid. The protein resides in the chloroplast. The catalysed reaction is (2E)-geranyl diphosphate = beta-phellandrene + diphosphate. It catalyses the reaction (2E)-geranyl diphosphate = (1R,5R)-sabinene + diphosphate. It functions in the pathway secondary metabolite biosynthesis; terpenoid biosynthesis. Its function is as follows. Involved in the biosynthesis of phenolic monoterpenes natural products. Monoterpene synthase that catalyzes mainly the formation of olefins such as sabinene and beta-phellandrene, and minor amounts of other monoterpenes (e.g. myrcene, gamma-terpinene, alpha-thujene and alpha-pinene) from geranyl diphosphate (GPP). This chain is Beta-phellandrene synthase, found in Origanum vulgare (Wild marjoram).